Reading from the N-terminus, the 93-residue chain is Integration host factor subunit beta (93 aa).

It belongs to the bacterial histone-like protein family. Heterodimer of an alpha and a beta chain.

In terms of biological role, this protein is one of the two subunits of integration host factor, a specific DNA-binding protein that functions in genetic recombination as well as in transcriptional and translational control. This is Integration host factor subunit beta (ihfB) from Mannheimia haemolytica (Pasteurella haemolytica).